Here is a 502-residue protein sequence, read N- to C-terminus: 2-isopropylmalate synthase (502 aa).

4 residues coordinate Mn(2+): D1, H189, H191, and N225. The Pyruvate carboxyltransferase domain maps to 1-254 (DGEQALQASL…STNINYKEIY (254 aa)). Positions 379-502 (CLKFFSVQSI…VNKKLQELKK (124 aa)) are regulatory domain.

This sequence belongs to the alpha-IPM synthase/homocitrate synthase family. LeuA type 1 subfamily. In terms of assembly, homodimer. The cofactor is Mn(2+).

The protein resides in the cytoplasm. The catalysed reaction is 3-methyl-2-oxobutanoate + acetyl-CoA + H2O = (2S)-2-isopropylmalate + CoA + H(+). Its pathway is amino-acid biosynthesis; L-leucine biosynthesis; L-leucine from 3-methyl-2-oxobutanoate: step 1/4. Functionally, catalyzes the condensation of the acetyl group of acetyl-CoA with 3-methyl-2-oxobutanoate (2-ketoisovalerate) to form 3-carboxy-3-hydroxy-4-methylpentanoate (2-isopropylmalate). This is 2-isopropylmalate synthase from Buchnera aphidicola subsp. Macrosiphoniella ludovicianae.